The chain runs to 387 residues: 1,3-propanediol dehydrogenase (387 aa).

This sequence belongs to the iron-containing alcohol dehydrogenase family. Homooctamer. Fe cation serves as cofactor.

It catalyses the reaction propane-1,3-diol + NAD(+) = 3-hydroxypropanal + NADH + H(+). In Klebsiella pneumoniae, this protein is 1,3-propanediol dehydrogenase (dhaT).